Consider the following 128-residue polypeptide: Holo-[acyl-carrier-protein] synthase (128 aa).

The Mg(2+) site is built by Asp-8 and Glu-58.

This sequence belongs to the P-Pant transferase superfamily. AcpS family. Mg(2+) serves as cofactor.

It is found in the cytoplasm. The enzyme catalyses apo-[ACP] + CoA = holo-[ACP] + adenosine 3',5'-bisphosphate + H(+). In terms of biological role, transfers the 4'-phosphopantetheine moiety from coenzyme A to a Ser of acyl-carrier-protein. This Alkalilimnicola ehrlichii (strain ATCC BAA-1101 / DSM 17681 / MLHE-1) protein is Holo-[acyl-carrier-protein] synthase.